Here is a 270-residue protein sequence, read N- to C-terminus: Phospholysine phosphohistidine inorganic pyrophosphate phosphatase (270 aa).

Residues Asp17 and Ser19 each coordinate Mg(2+). Residues 17 to 19, 54 to 55, and Lys189 each bind substrate; these read DIS and TN. Residue Asp214 participates in Mg(2+) binding.

The protein belongs to the HAD-like hydrolase superfamily. Homodimer. Mg(2+) is required as a cofactor.

The protein localises to the cytoplasm. The protein resides in the nucleus. The enzyme catalyses diphosphate + H2O = 2 phosphate + H(+). In terms of biological role, phosphatase that hydrolyzes imidodiphosphate, 3-phosphohistidine and 6-phospholysine. Has broad substrate specificity and can also hydrolyze inorganic diphosphate, but with lower efficiency. This is Phospholysine phosphohistidine inorganic pyrophosphate phosphatase (Lhpp) from Rattus norvegicus (Rat).